Reading from the N-terminus, the 214-residue chain is Adenylate kinase (214 aa).

10–15 provides a ligand contact to ATP; the sequence is GAGKGT. Residues 30-59 form an NMP region; the sequence is STGDMFREAVASKSELGKKVEEILKRGDLV. AMP-binding positions include T31, R36, 57-59, 85-88, and Q92; these read DLV and GFPR. An LID region spans residues 126–163; it reads NRRICSNCGKIYNLITLPPKVDGKCDVCGGTLYQREDD. Residue R127 coordinates ATP. Zn(2+) contacts are provided by C130 and C133. 136-137 contributes to the ATP binding site; that stretch reads IY. C150 and C153 together coordinate Zn(2+). AMP is bound by residues R160 and R171. L199 is an ATP binding site.

This sequence belongs to the adenylate kinase family. In terms of assembly, monomer.

Its subcellular location is the cytoplasm. The enzyme catalyses AMP + ATP = 2 ADP. The protein operates within purine metabolism; AMP biosynthesis via salvage pathway; AMP from ADP: step 1/1. Catalyzes the reversible transfer of the terminal phosphate group between ATP and AMP. Plays an important role in cellular energy homeostasis and in adenine nucleotide metabolism. The protein is Adenylate kinase of Thermosipho africanus (strain TCF52B).